The primary structure comprises 262 residues: ATP synthase subunit a (262 aa).

Helical transmembrane passes span 24–44 (AVHLDTLFFSLLAGVIFLFVF), 84–104 (VIAPLALTIFCWVFIMNAIDL), 129–149 (DISATLGMSICVFFLILFYTV), 194–214 (LFGNMYAGELIFILIAVMYMA), and 228–248 (LVWAIFHILVITLQAFIFMML).

This sequence belongs to the ATPase A chain family. F-type ATPases have 2 components, CF(1) - the catalytic core - and CF(0) - the membrane proton channel. CF(1) has five subunits: alpha(3), beta(3), gamma(1), delta(1), epsilon(1). CF(0) has three main subunits: a(1), b(2) and c(9-12). The alpha and beta chains form an alternating ring which encloses part of the gamma chain. CF(1) is attached to CF(0) by a central stalk formed by the gamma and epsilon chains, while a peripheral stalk is formed by the delta and b chains.

It localises to the cell inner membrane. Key component of the proton channel; it plays a direct role in the translocation of protons across the membrane. This chain is ATP synthase subunit a, found in Actinobacillus pleuropneumoniae serotype 3 (strain JL03).